Reading from the N-terminus, the 123-residue chain is Small ribosomal subunit protein uS12 (123 aa).

The tract at residues 1–24 (MPTINQLVRKGRTPQKVKSKVPAM) is disordered. Positions 9–19 (RKGRTPQKVKS) are enriched in basic residues. A 3-methylthioaspartic acid modification is found at Asp-89.

Belongs to the universal ribosomal protein uS12 family. Part of the 30S ribosomal subunit. Contacts proteins S8 and S17. May interact with IF1 in the 30S initiation complex.

In terms of biological role, with S4 and S5 plays an important role in translational accuracy. Interacts with and stabilizes bases of the 16S rRNA that are involved in tRNA selection in the A site and with the mRNA backbone. Located at the interface of the 30S and 50S subunits, it traverses the body of the 30S subunit contacting proteins on the other side and probably holding the rRNA structure together. The combined cluster of proteins S8, S12 and S17 appears to hold together the shoulder and platform of the 30S subunit. This is Small ribosomal subunit protein uS12 from Sphingopyxis alaskensis (strain DSM 13593 / LMG 18877 / RB2256) (Sphingomonas alaskensis).